Here is a 428-residue protein sequence, read N- to C-terminus: Histidine--tRNA ligase (428 aa).

This sequence belongs to the class-II aminoacyl-tRNA synthetase family. Homodimer.

It is found in the cytoplasm. It carries out the reaction tRNA(His) + L-histidine + ATP = L-histidyl-tRNA(His) + AMP + diphosphate + H(+). This is Histidine--tRNA ligase from Buchnera aphidicola subsp. Schizaphis graminum (strain Sg).